A 120-amino-acid chain; its full sequence is NAD(P)H-quinone oxidoreductase subunit 3, chloroplastic (120 aa).

3 consecutive transmembrane segments (helical) span residues 9–29, 64–84, and 88–108; these read IFWA…LISG, MFAL…PWAM, and VLGV…ILGL.

This sequence belongs to the complex I subunit 3 family. As to quaternary structure, NDH is composed of at least 16 different subunits, 5 of which are encoded in the nucleus.

The protein localises to the plastid. It localises to the chloroplast thylakoid membrane. It catalyses the reaction a plastoquinone + NADH + (n+1) H(+)(in) = a plastoquinol + NAD(+) + n H(+)(out). It carries out the reaction a plastoquinone + NADPH + (n+1) H(+)(in) = a plastoquinol + NADP(+) + n H(+)(out). Functionally, NDH shuttles electrons from NAD(P)H:plastoquinone, via FMN and iron-sulfur (Fe-S) centers, to quinones in the photosynthetic chain and possibly in a chloroplast respiratory chain. The immediate electron acceptor for the enzyme in this species is believed to be plastoquinone. Couples the redox reaction to proton translocation, and thus conserves the redox energy in a proton gradient. The polypeptide is NAD(P)H-quinone oxidoreductase subunit 3, chloroplastic (Arabis hirsuta (Hairy rock-cress)).